A 372-amino-acid polypeptide reads, in one-letter code: Probable G-protein coupled receptor 45 (372 aa).

Topologically, residues 1–38 (MACNSTSLEAYTYLLLNTSNASDSGSTQLPAPLRISLA) are extracellular. Asn4, Asn17, and Asn20 each carry an N-linked (GlcNAc...) asparagine glycan. The chain crosses the membrane as a helical span at residues 39-59 (IVMLLMTVVGFLGNTVVCIIV). Over 60–75 (YQRPAMRSAINLLLAT) the chain is Cytoplasmic. A helical membrane pass occupies residues 76-96 (LAFSDIMLSLCCMPFTAVTLI). Topologically, residues 97–109 (TVRWHFGDHFCRL) are extracellular. Residues 110 to 130 (SATLYWFFVLEGVAILLIISV) traverse the membrane as a helical segment. Residues 131 to 149 (DRFLIIVQRQDKLNPRRAK) are Cytoplasmic-facing. A helical membrane pass occupies residues 150–170 (VIIAVSWVLSFCIAGPSLTGW). Residues 171–198 (TLVEVPARAPQCVLGYTELPADRAYVVT) are Extracellular-facing. The helical transmembrane segment at 199–219 (LVVAVFFAPFGVMLCAYMCIL) threads the bilayer. Topologically, residues 220–268 (NTVRKNAVRVHNQSDSLDLRQLTRAGLRRLQRQQQVSVDLSFKTKAFTT) are cytoplasmic. Residues 269–289 (ILILFVGFSLCWLPHSVYSLL) form a helical membrane-spanning segment. Residues 290-305 (SVFSQRFYCGSSFYAT) lie on the Extracellular side of the membrane. The helical transmembrane segment at 306 to 326 (STCVLWLSYLKSVFNPIVYCW) threads the bilayer. Residues 327 to 372 (RIKKFREACIELLPQTFQILPKVPERIRRRIQPSTVYVCNENQSAV) lie on the Cytoplasmic side of the membrane.

It belongs to the G-protein coupled receptor 1 family. In terms of tissue distribution, expressed in brain; detected in the basal forebrain, frontal cortex, and caudate, but not in thalamus, hippocampus, or putamen.

The protein localises to the cell membrane. Functionally, orphan receptor. May play a role in brain function. The protein is Probable G-protein coupled receptor 45 (GPR45) of Homo sapiens (Human).